The chain runs to 377 residues: tRNA-specific 2-thiouridylase MnmA (377 aa).

ATP is bound by residues 12-19 and M38; that span reads GMSGGVDS. An interaction with target base in tRNA region spans residues 98–100; it reads NPD. The active-site Nucleophile is C103. Residues C103 and C200 are joined by a disulfide bond. G127 is an ATP binding site. Residues 150 to 152 are interaction with tRNA; it reads KDQ. The Cysteine persulfide intermediate role is filled by C200. Residues 313 to 314 are interaction with tRNA; the sequence is RY.

The protein belongs to the MnmA/TRMU family.

Its subcellular location is the cytoplasm. The enzyme catalyses S-sulfanyl-L-cysteinyl-[protein] + uridine(34) in tRNA + AH2 + ATP = 2-thiouridine(34) in tRNA + L-cysteinyl-[protein] + A + AMP + diphosphate + H(+). In terms of biological role, catalyzes the 2-thiolation of uridine at the wobble position (U34) of tRNA, leading to the formation of s(2)U34. The polypeptide is tRNA-specific 2-thiouridylase MnmA (Pediococcus pentosaceus (strain ATCC 25745 / CCUG 21536 / LMG 10740 / 183-1w)).